The following is a 313-amino-acid chain: Olfactory receptor 51A2 (313 aa).

Residues 1-27 are Extracellular-facing; that stretch reads MSIINTSYVEITTFFLVGMPGLEYAHI. A glycan (N-linked (GlcNAc...) asparagine) is linked at Asn5. A helical transmembrane segment spans residues 28–48; it reads WISIPICSMYLIAILGNGTIL. Topologically, residues 49–56 are cytoplasmic; the sequence is FIIKTEPS. The helical transmembrane segment at 57–77 threads the bilayer; that stretch reads LHGPMYYFLSMLAMSDLGLSL. Residues 78-101 lie on the Extracellular side of the membrane; it reads SSLPTVLSIFLFNAPETSSSACFA. Cys99 and Cys191 are oxidised to a cystine. The helical transmembrane segment at 102 to 122 threads the bilayer; it reads QEFFIHGFSVLESSVLLIMSF. The Cytoplasmic portion of the chain corresponds to 123–141; that stretch reads DRFLAIHNPLRYTSILTTV. The chain crosses the membrane as a helical span at residues 142–162; the sequence is RVAQIGIVFSFKSMLLVLPFP. Over 163–198 the chain is Extracellular; it reads FTLRSLRYCKKNQLSHSYCLHQDVMKLACSDNRIDV. A helical transmembrane segment spans residues 199–218; that stretch reads IYGFFGALCLMVDFILIAVS. At 219–238 the chain is on the cytoplasmic side; it reads YTLILKTVPGIASKKEELKA. The chain crosses the membrane as a helical span at residues 239-259; the sequence is LNTCVSHICAVIIFYLPIINL. Topologically, residues 260-274 are extracellular; that stretch reads AVVHRFAGHVSPLIN. Residues 275–295 traverse the membrane as a helical segment; that stretch reads VLMANVLLLVPPLMKPIVYCV. Over 296–313 the chain is Cytoplasmic; it reads KTKQIRVRVVAKLCQWKI.

Belongs to the G-protein coupled receptor 1 family.

It is found in the cell membrane. In terms of biological role, odorant receptor. The chain is Olfactory receptor 51A2 (OR51A2) from Homo sapiens (Human).